A 263-amino-acid chain; its full sequence is uncharacterized protein (263 aa).

The signal sequence occupies residues 1-22 (MRYLKRVVLYRIVMVLSVFIIG). Cysteine 23 carries N-palmitoyl cysteine lipidation. The S-diacylglycerol cysteine moiety is linked to residue cysteine 23.

Belongs to the staphylococcal tandem lipoprotein family.

It is found in the cell membrane. This is an uncharacterized protein from Staphylococcus aureus (strain bovine RF122 / ET3-1).